Here is a 466-residue protein sequence, read N- to C-terminus: Chromosomal replication initiator protein DnaA (466 aa).

The domain I, interacts with DnaA modulators stretch occupies residues Met-1–Thr-86. The domain II stretch occupies residues Thr-86 to Ser-129. Residues Asn-130–Ala-346 are domain III, AAA+ region. ATP contacts are provided by Gly-174, Gly-176, Lys-177, and Thr-178. The segment at Asn-347–Ser-466 is domain IV, binds dsDNA.

Belongs to the DnaA family. In terms of assembly, oligomerizes as a right-handed, spiral filament on DNA at oriC.

It is found in the cytoplasm. Plays an essential role in the initiation and regulation of chromosomal replication. ATP-DnaA binds to the origin of replication (oriC) to initiate formation of the DNA replication initiation complex once per cell cycle. Binds the DnaA box (a 9 base pair repeat at the origin) and separates the double-stranded (ds)DNA. Forms a right-handed helical filament on oriC DNA; dsDNA binds to the exterior of the filament while single-stranded (ss)DNA is stabiized in the filament's interior. The ATP-DnaA-oriC complex binds and stabilizes one strand of the AT-rich DNA unwinding element (DUE), permitting loading of DNA polymerase. After initiation quickly degrades to an ADP-DnaA complex that is not apt for DNA replication. Binds acidic phospholipids. In Salmonella gallinarum (strain 287/91 / NCTC 13346), this protein is Chromosomal replication initiator protein DnaA.